A 443-amino-acid chain; its full sequence is UDP-N-acetylmuramate--L-alanine ligase (443 aa).

110-116 provides a ligand contact to ATP; the sequence is GAHGKTS.

Belongs to the MurCDEF family.

It is found in the cytoplasm. It catalyses the reaction UDP-N-acetyl-alpha-D-muramate + L-alanine + ATP = UDP-N-acetyl-alpha-D-muramoyl-L-alanine + ADP + phosphate + H(+). Its pathway is cell wall biogenesis; peptidoglycan biosynthesis. Its function is as follows. Cell wall formation. In Streptococcus agalactiae serotype Ia (strain ATCC 27591 / A909 / CDC SS700), this protein is UDP-N-acetylmuramate--L-alanine ligase.